The sequence spans 853 residues: Transforming growth factor beta receptor type 3 (853 aa).

The first 23 residues, 1–23 (MAVTSHHMIPVMVVLMSACLATA), serve as a signal peptide directing secretion. The Extracellular portion of the chain corresponds to 24 to 789 (GPEPSTRCEL…IFHGLDTLTV (766 aa)). 3 N-linked (GlcNAc...) asparagine glycosylation sites follow: Asn37, Asn144, and Asn493. The cysteines at positions 55 and 200 are disulfide-linked. Residues 456 to 730 (KCDHEKMVVA…PRCVTPDDAC (275 aa)) enclose the ZP domain. Positions 530–559 (SPGDSSGWPDGYEDLESGDNGFPGDGDEGE) are disordered. Ser535 and Ser546 each carry an O-linked (Xyl...) (glycosaminoglycan) serine glycan. Asn572, Asn591, and Asn698 each carry an N-linked (GlcNAc...) asparagine glycan. Cystine bridges form between Cys640–Cys706, Cys661–Cys730, and Cys711–Cys723. The segment at 737 to 751 (MIWTMMQNKKTFTKP) is interaction with TGF-beta ligand. Residues 790-811 (MGIAFAAFVIGALLTGALWYIY) form a helical membrane-spanning segment. At 812–853 (SHTGETARRQQVPTSPPASENSSAAHSIGSTQSTPCSSSSTA) the chain is on the cytoplasmic side. Positions 820–836 (RQQVPTSPPASENSSAA) are enriched in polar residues. Residues 820 to 853 (RQQVPTSPPASENSSAAHSIGSTQSTPCSSSSTA) are disordered. The span at 838 to 853 (SIGSTQSTPCSSSSTA) shows a compositional bias: low complexity. Position 842 is a phosphothreonine (Thr842).

Forms homodimers and homooligomers. Interacts with DYNLT4. Interacts with integrin ITGA5:ITGB1; this interaction promotes the internalization and trafficking of ITGA5:ITGB1 into endocytic vesicles. Interacts with TGFB1, BMP2, BMP5, BMP7 or GDF5 and inhibin A via the ligand binding domains. Interacts with ALK3/BMPR1A; this interaction results in the cell surface retention of BMPR1A. Interacts with ALK6/BMPR1B; this interaction enhances BMPR1B-mediated stimulation of the BMP signaling pathway. Interacts with the scaffolding protein beta-arrestin2/ARRB2; this interaction mediates internalization of TGFBR3 and thus regulates migration, actin cytoskeleton and activation of CDC42. In terms of processing, extensively modified by glycosaminoglycan groups (GAG). Phosphorylated in the cytoplasmic domain by the type II receptor TGFBR2 at THR-842 to mediate recruitment of ARRB2 and subsequent internalization of TGFBR2 and TGFBR3.

Its subcellular location is the cell membrane. It is found in the secreted. It localises to the extracellular space. The protein localises to the extracellular matrix. Its function is as follows. Cell surface receptor that regulates diverse cellular processes including cell proliferation, differentiation, migration, and apoptosis. Initiates BMP, inhibin, and TGF-beta signaling pathways by interacting with different ligands including TGFB1, BMP2, BMP5, BMP7 or GDF5. Alternatively, acts as a cell surface coreceptor for BMP ligands, serving to enhance ligand binding by differentially regulating BMPR1A/ALK3 and BMPR1B/ALK6 receptor trafficking. Promotes epithelial cell adhesion, focal adhesion formation and integrin signaling during epithelial cell spreading on fibronectin. By interacting with the scaffolding protein beta-arrestin2/ARRB2, regulates migration or actin cytoskeleton and promotes the activation of CDC42 as well as the inhibition of NF-kappa-B. In gonadotrope cells, acts as an inhibin A coreceptor and regulates follicle-stimulating hormone (FSH) levels and female fertility. Plays a role in the inhibition of directed and random cell migration in epithelial cells by altering the actin cytoskeletal organization. Participates in epithelial-mesenchymal transformation (EMT) upon binding to BMP2 or TGFB2, by activating the PAR6/SMURF1/RHOA pathway. In Rattus norvegicus (Rat), this protein is Transforming growth factor beta receptor type 3 (Tgfbr3).